Here is a 452-residue protein sequence, read N- to C-terminus: Nuclear distribution protein PAC1 (452 aa).

A LisH domain is found at 12–44 (QKDELHKAILAYFSASGLSNTGAALREELGVGD). The stretch at 64 to 91 (TGVLRLQKKIMELESRLSSLQSELDSAT) forms a coiled coil. WD repeat units lie at residues 117 to 158 (SHRN…RTVK), 160 to 200 (HTKA…KNIR), 204 to 245 (GHDH…CVKT), 248 to 287 (GHSDWIRDVEPSHDGRWLLSAGGDQTTRLWDASTAEHKAT), 290 to 350 (GHEH…LKTL), 352 to 391 (GHDNWIRALAFHPAGKYLLSVSDDKTIRCWDLTQDGRCVK), 396 to 435 (AHSHFATCLRWAPAPAKEQTNGEAKTNGIPKAGEKVINVR), and 437 to 452 (VIATGSADMNVRVFAS).

The protein belongs to the WD repeat LIS1/nudF family. Self-associates. Interacts with NDL1 and dynein.

Its subcellular location is the cytoplasm. The protein resides in the cytoskeleton. It is found in the spindle pole. Functionally, positively regulates the activity of the minus-end directed microtubule motor protein dynein. May enhance dynein-mediated microtubule sliding by targeting dynein to the microtubule plus end. Required for nuclear migration during vegetative growth as well as development. Required for retrograde early endosome (EE) transport from the hyphal tip. Required for localization of dynein to the mitotic spindle poles. Recruits additional proteins to the dynein complex at SPBs. This is Nuclear distribution protein PAC1 from Tuber melanosporum (strain Mel28) (Perigord black truffle).